A 389-amino-acid chain; its full sequence is Chorismate synthase (389 aa).

The NADP(+) site is built by R41 and R47. FMN is bound by residues 129–131, 247–248, G291, 306–310, and R332; these read RSS, NA, and KPIST.

Belongs to the chorismate synthase family. As to quaternary structure, homotetramer. It depends on FMNH2 as a cofactor.

The enzyme catalyses 5-O-(1-carboxyvinyl)-3-phosphoshikimate = chorismate + phosphate. Its pathway is metabolic intermediate biosynthesis; chorismate biosynthesis; chorismate from D-erythrose 4-phosphate and phosphoenolpyruvate: step 7/7. In terms of biological role, catalyzes the anti-1,4-elimination of the C-3 phosphate and the C-6 proR hydrogen from 5-enolpyruvylshikimate-3-phosphate (EPSP) to yield chorismate, which is the branch point compound that serves as the starting substrate for the three terminal pathways of aromatic amino acid biosynthesis. This reaction introduces a second double bond into the aromatic ring system. The protein is Chorismate synthase of Rubrobacter xylanophilus (strain DSM 9941 / JCM 11954 / NBRC 16129 / PRD-1).